The primary structure comprises 145 residues: D-aminoacyl-tRNA deacylase (145 aa).

The short motif at 137-138 is the Gly-cisPro motif, important for rejection of L-amino acids element; sequence GP.

Belongs to the DTD family. In terms of assembly, homodimer.

Its subcellular location is the cytoplasm. It carries out the reaction glycyl-tRNA(Ala) + H2O = tRNA(Ala) + glycine + H(+). The catalysed reaction is a D-aminoacyl-tRNA + H2O = a tRNA + a D-alpha-amino acid + H(+). Its function is as follows. An aminoacyl-tRNA editing enzyme that deacylates mischarged D-aminoacyl-tRNAs. Also deacylates mischarged glycyl-tRNA(Ala), protecting cells against glycine mischarging by AlaRS. Acts via tRNA-based rather than protein-based catalysis; rejects L-amino acids rather than detecting D-amino acids in the active site. By recycling D-aminoacyl-tRNA to D-amino acids and free tRNA molecules, this enzyme counteracts the toxicity associated with the formation of D-aminoacyl-tRNA entities in vivo and helps enforce protein L-homochirality. This chain is D-aminoacyl-tRNA deacylase, found in Pectobacterium carotovorum subsp. carotovorum (strain PC1).